Consider the following 557-residue polypeptide: Dihydroxy-acid dehydratase (557 aa).

A [2Fe-2S] cluster-binding site is contributed by cysteine 50. Residue aspartate 82 participates in Mg(2+) binding. Cysteine 123 is a [2Fe-2S] cluster binding site. Aspartate 124 and lysine 125 together coordinate Mg(2+). Lysine 125 is subject to N6-carboxylysine. Cysteine 195 contributes to the [2Fe-2S] cluster binding site. Residue glutamate 447 participates in Mg(2+) binding. Serine 473 functions as the Proton acceptor in the catalytic mechanism.

It belongs to the IlvD/Edd family. Homodimer. [2Fe-2S] cluster is required as a cofactor. Mg(2+) serves as cofactor.

The catalysed reaction is (2R)-2,3-dihydroxy-3-methylbutanoate = 3-methyl-2-oxobutanoate + H2O. The enzyme catalyses (2R,3R)-2,3-dihydroxy-3-methylpentanoate = (S)-3-methyl-2-oxopentanoate + H2O. The protein operates within amino-acid biosynthesis; L-isoleucine biosynthesis; L-isoleucine from 2-oxobutanoate: step 3/4. It participates in amino-acid biosynthesis; L-valine biosynthesis; L-valine from pyruvate: step 3/4. In terms of biological role, functions in the biosynthesis of branched-chain amino acids. Catalyzes the dehydration of (2R,3R)-2,3-dihydroxy-3-methylpentanoate (2,3-dihydroxy-3-methylvalerate) into 2-oxo-3-methylpentanoate (2-oxo-3-methylvalerate) and of (2R)-2,3-dihydroxy-3-methylbutanoate (2,3-dihydroxyisovalerate) into 2-oxo-3-methylbutanoate (2-oxoisovalerate), the penultimate precursor to L-isoleucine and L-valine, respectively. This Ralstonia nicotianae (strain ATCC BAA-1114 / GMI1000) (Ralstonia solanacearum) protein is Dihydroxy-acid dehydratase.